A 467-amino-acid chain; its full sequence is UDP-N-acetylmuramate--L-alanine ligase (467 aa).

An ATP-binding site is contributed by 114-120 (GTHGKTT).

Belongs to the MurCDEF family.

It localises to the cytoplasm. It catalyses the reaction UDP-N-acetyl-alpha-D-muramate + L-alanine + ATP = UDP-N-acetyl-alpha-D-muramoyl-L-alanine + ADP + phosphate + H(+). Its pathway is cell wall biogenesis; peptidoglycan biosynthesis. Functionally, cell wall formation. The sequence is that of UDP-N-acetylmuramate--L-alanine ligase from Rhodopseudomonas palustris (strain BisB5).